A 496-amino-acid chain; its full sequence is Cytochrome P450 71D178 (496 aa).

The chain crosses the membrane as a helical; Signal-anchor for type II membrane protein span at residues 1-21 (MDISISWVVIILLVLSYLILM). Residue cysteine 435 participates in heme binding.

Belongs to the cytochrome P450 family. It depends on heme as a cofactor. In terms of tissue distribution, expressed in flowers, leaves and stems, especially in glandular trichomes.

Its subcellular location is the membrane. The catalysed reaction is (4S)-limonene + reduced [NADPH--hemoprotein reductase] + O2 = (1S,5R)-carveol + oxidized [NADPH--hemoprotein reductase] + H2O + H(+). It carries out the reaction gamma-terpinene + 2 reduced [NADPH--hemoprotein reductase] + 2 O2 = carvacrol + 2 oxidized [NADPH--hemoprotein reductase] + 3 H2O + 2 H(+). The enzyme catalyses gamma-terpinene + 2 reduced [NADPH--hemoprotein reductase] + 2 O2 = thymol + 2 oxidized [NADPH--hemoprotein reductase] + 3 H2O + 2 H(+). It catalyses the reaction (4R)-limonene + reduced [NADPH--hemoprotein reductase] + O2 = (1R,6S)-isopiperitenol + oxidized [NADPH--hemoprotein reductase] + H2O + H(+). It participates in secondary metabolite biosynthesis; terpenoid biosynthesis. In terms of biological role, involved in the biosynthesis of phenolic monoterpenes natural products thymol and carvacrol which have a broad range of biological activities acting as antimicrobial compounds, insecticides, antioxidants and pharmaceutical agents. Catalyzes the C2- and C3-hydroxylation of gamma-terpinene to produce carvacrol and thymol, respectively. Also mediates the C6-hydroxylation of (4S)-limonene to form carveol and the C3-hydroxylation of (4R)-limonene to generate (+)-trans-isopiperitenol. This Origanum vulgare (Wild marjoram) protein is Cytochrome P450 71D178.